The sequence spans 149 residues: MRCPFCAMEETKVIDSRLVSDGYQVRRRRECGYCHERFTTFESAEVIVPKIIKNDGSREPFDEDKLRRGIQHALEKRPVSSDDVEKAISRIIYQLRATGERDVKSQDVGRLVMAELKELDKVAYIRFASVYLSFDDINQFTNEIEKLKD.

A zinc finger spans residues 3–34 (CPFCAMEETKVIDSRLVSDGYQVRRRRECGYC). Residues 49–139 (PKIIKNDGSR…VYLSFDDINQ (91 aa)) enclose the ATP-cone domain.

The protein belongs to the NrdR family. The cofactor is Zn(2+).

Functionally, negatively regulates transcription of bacterial ribonucleotide reductase nrd genes and operons by binding to NrdR-boxes. The sequence is that of Transcriptional repressor NrdR from Histophilus somni (strain 129Pt) (Haemophilus somnus).